Consider the following 245-residue polypeptide: 1-(5-phosphoribosyl)-5-[(5-phosphoribosylamino)methylideneamino] imidazole-4-carboxamide isomerase (245 aa).

The active-site Proton acceptor is D11. D132 functions as the Proton donor in the catalytic mechanism.

This sequence belongs to the HisA/HisF family.

The protein resides in the cytoplasm. It carries out the reaction 1-(5-phospho-beta-D-ribosyl)-5-[(5-phospho-beta-D-ribosylamino)methylideneamino]imidazole-4-carboxamide = 5-[(5-phospho-1-deoxy-D-ribulos-1-ylimino)methylamino]-1-(5-phospho-beta-D-ribosyl)imidazole-4-carboxamide. The protein operates within amino-acid biosynthesis; L-histidine biosynthesis; L-histidine from 5-phospho-alpha-D-ribose 1-diphosphate: step 4/9. This Bacillus licheniformis (strain ATCC 14580 / DSM 13 / JCM 2505 / CCUG 7422 / NBRC 12200 / NCIMB 9375 / NCTC 10341 / NRRL NRS-1264 / Gibson 46) protein is 1-(5-phosphoribosyl)-5-[(5-phosphoribosylamino)methylideneamino] imidazole-4-carboxamide isomerase.